A 102-amino-acid chain; its full sequence is Small ribosomal subunit protein uS10 (102 aa).

It belongs to the universal ribosomal protein uS10 family. Part of the 30S ribosomal subunit.

Its function is as follows. Involved in the binding of tRNA to the ribosomes. The polypeptide is Small ribosomal subunit protein uS10 (rpsJ) (Bacillus subtilis (strain 168)).